A 554-amino-acid polypeptide reads, in one-letter code: Glutamine--tRNA ligase (554 aa).

The 'HIGH' region motif lies at 34–44; the sequence is PEPNGYLHIGH. ATP contacts are provided by residues 35–37 and 41–47; these read EPN and HIGHAKS. 2 residues coordinate L-glutamine: D67 and Y212. ATP-binding positions include T231, 261-262, and 269-271; these read RL and MSK. A 'KMSKS' region motif is present at residues 268–272; sequence VMSKR. The interval 317–324 is interaction with tRNA; the sequence is TKQDNTIE.

This sequence belongs to the class-I aminoacyl-tRNA synthetase family. In terms of assembly, monomer.

The protein localises to the cytoplasm. The enzyme catalyses tRNA(Gln) + L-glutamine + ATP = L-glutaminyl-tRNA(Gln) + AMP + diphosphate. This is Glutamine--tRNA ligase from Shigella dysenteriae serotype 1 (strain Sd197).